The primary structure comprises 267 residues: Cell division protein FtsQ (267 aa).

Residues 1–32 are Cytoplasmic-facing; sequence MRKKTSSNKKNTAKKNNNISLHRKLGLIYKKT. Residues 33–53 traverse the membrane as a helical segment; the sequence is ILILKIVLIIFICLFAFTKYF. Over 54-267 the chain is Periplasmic; it reads ASLKSYLKTN…DKNKYYIEKY (214 aa). The 69-residue stretch at 73–141 folds into the POTRA domain; that stretch reads FKLENVIIEG…STIYIKLFER (69 aa).

Belongs to the FtsQ/DivIB family. FtsQ subfamily.

It localises to the cell inner membrane. Functionally, essential cell division protein. The polypeptide is Cell division protein FtsQ (Rickettsia bellii (strain RML369-C)).